We begin with the raw amino-acid sequence, 387 residues long: Thermostable celloxylanase (387 aa).

The GH10 domain occupies 41-382 (AEDIPSLAEA…KPAFWAIVDP (342 aa)). Glu185 functions as the Proton donor in the catalytic mechanism. The active-site Nucleophile is Glu293.

It belongs to the glycosyl hydrolase 10 (cellulase F) family.

The catalysed reaction is Endohydrolysis of (1-&gt;4)-beta-D-glucosidic linkages in cellulose, lichenin and cereal beta-D-glucans.. It catalyses the reaction Endohydrolysis of (1-&gt;4)-beta-D-xylosidic linkages in xylans.. It participates in glycan degradation; xylan degradation. Its function is as follows. Active toward xylan, carboxymethylcellulose, P-nitrophenyl-beta-D-xylopyranoside and P-nitrophenyl-beta-D-cellobioside. This Thermoclostridium stercorarium (Clostridium stercorarium) protein is Thermostable celloxylanase (xynB).